Here is a 546-residue protein sequence, read N- to C-terminus: Chaperonin GroEL (546 aa).

ATP is bound by residues 29–32 (TMGP), Lys-50, 86–90 (DGTTT), Gly-414, and Asp-492.

Belongs to the chaperonin (HSP60) family. As to quaternary structure, forms a cylinder of 14 subunits composed of two heptameric rings stacked back-to-back. Interacts with the co-chaperonin GroES.

It localises to the cytoplasm. It carries out the reaction ATP + H2O + a folded polypeptide = ADP + phosphate + an unfolded polypeptide.. In terms of biological role, together with its co-chaperonin GroES, plays an essential role in assisting protein folding. The GroEL-GroES system forms a nano-cage that allows encapsulation of the non-native substrate proteins and provides a physical environment optimized to promote and accelerate protein folding. In Helicobacter pylori (strain Shi470), this protein is Chaperonin GroEL.